Consider the following 397-residue polypeptide: S-adenosylmethionine synthase (397 aa).

Histidine 17 provides a ligand contact to ATP. Residue aspartate 19 participates in Mg(2+) binding. Glutamate 45 is a K(+) binding site. Residues glutamate 58 and glutamine 101 each contribute to the L-methionine site. Residues 101–111 (QSPDIAQGVDK) are flexible loop. ATP-binding positions include 176 to 178 (DGK), 243 to 244 (RF), aspartate 252, 258 to 259 (RK), and lysine 279. Aspartate 252 contacts L-methionine. Lysine 283 provides a ligand contact to L-methionine.

This sequence belongs to the AdoMet synthase family. Homotetramer; dimer of dimers. The cofactor is Mg(2+). It depends on K(+) as a cofactor.

The protein resides in the cytoplasm. It catalyses the reaction L-methionine + ATP + H2O = S-adenosyl-L-methionine + phosphate + diphosphate. Its pathway is amino-acid biosynthesis; S-adenosyl-L-methionine biosynthesis; S-adenosyl-L-methionine from L-methionine: step 1/1. Catalyzes the formation of S-adenosylmethionine (AdoMet) from methionine and ATP. The overall synthetic reaction is composed of two sequential steps, AdoMet formation and the subsequent tripolyphosphate hydrolysis which occurs prior to release of AdoMet from the enzyme. The chain is S-adenosylmethionine synthase from Staphylococcus aureus.